A 140-amino-acid chain; its full sequence is Protein ARABIDOPSIS THALIANA ANTHER 7 (140 aa).

Positions Met1–Ser20 are cleaved as a signal peptide. Intrachain disulfides connect Cys29-Cys87, Cys39-Cys54, Cys55-Cys111, and Cys85-Cys125.

Belongs to the plant LTP family. As to expression, tapetum-specific. Also present in pollen.

The protein resides in the endoplasmic reticulum lumen. The protein is Protein ARABIDOPSIS THALIANA ANTHER 7 of Arabidopsis thaliana (Mouse-ear cress).